A 179-amino-acid chain; its full sequence is UPF0227 protein Sbal_2415 (179 aa).

The protein belongs to the UPF0227 family.

The chain is UPF0227 protein Sbal_2415 from Shewanella baltica (strain OS155 / ATCC BAA-1091).